The primary structure comprises 258 residues: Imidazole glycerol phosphate synthase subunit HisF (258 aa).

Residues Asp11 and Asp130 contribute to the active site.

It belongs to the HisA/HisF family. In terms of assembly, heterodimer of HisH and HisF.

The protein localises to the cytoplasm. It carries out the reaction 5-[(5-phospho-1-deoxy-D-ribulos-1-ylimino)methylamino]-1-(5-phospho-beta-D-ribosyl)imidazole-4-carboxamide + L-glutamine = D-erythro-1-(imidazol-4-yl)glycerol 3-phosphate + 5-amino-1-(5-phospho-beta-D-ribosyl)imidazole-4-carboxamide + L-glutamate + H(+). Its pathway is amino-acid biosynthesis; L-histidine biosynthesis; L-histidine from 5-phospho-alpha-D-ribose 1-diphosphate: step 5/9. Its function is as follows. IGPS catalyzes the conversion of PRFAR and glutamine to IGP, AICAR and glutamate. The HisF subunit catalyzes the cyclization activity that produces IGP and AICAR from PRFAR using the ammonia provided by the HisH subunit. This Methylobacterium nodulans (strain LMG 21967 / CNCM I-2342 / ORS 2060) protein is Imidazole glycerol phosphate synthase subunit HisF.